The primary structure comprises 122 residues: Ribosome-binding factor A (122 aa).

The protein belongs to the RbfA family. Monomer. Binds 30S ribosomal subunits, but not 50S ribosomal subunits or 70S ribosomes.

The protein localises to the cytoplasm. Its function is as follows. One of several proteins that assist in the late maturation steps of the functional core of the 30S ribosomal subunit. Associates with free 30S ribosomal subunits (but not with 30S subunits that are part of 70S ribosomes or polysomes). Required for efficient processing of 16S rRNA. May interact with the 5'-terminal helix region of 16S rRNA. This is Ribosome-binding factor A from Cupriavidus necator (strain ATCC 17699 / DSM 428 / KCTC 22496 / NCIMB 10442 / H16 / Stanier 337) (Ralstonia eutropha).